The chain runs to 622 residues: Kinesin light chain 2 (622 aa).

A coiled-coil region spans residues 78–143 (ILALSSHLGA…KQHLLFMSQI (66 aa)). Residues 145–164 (KLDEDASPNEEKGDVPKDTL) are compositionally biased toward basic and acidic residues. The interval 145–191 (KLDEDASPNEEKGDVPKDTLDDLFPNEDEQSPAPSPGGGDVSGQHGG) is disordered. A phosphoserine mark is found at S151, S175, and S179. Over residues 180–190 (PGGGDVSGQHG) the composition is skewed to gly residues. 5 TPR repeats span residues 198–231 (LRTL…LEKT), 240–273 (ATML…REKT), 282–315 (AATL…REKV), 324–357 (AKQL…YATR), and 366–399 (AKTK…AHEK). Position 445 is a phosphoserine (S445). The stretch at 449–482 (NTTLRSLGALYRRQGKLEAAHTLEDCASRNRKQG) is one TPR 6 repeat. 2 disordered regions span residues 476–548 (SRNR…SFGK) and 563–622 (KLQG…SLVG). The span at 493–509 (ELLKDGSGRRGDRRSSR) shows a compositional bias: basic and acidic residues. Phosphoserine occurs at positions 508 and 521. The segment covering 538 to 547 (GSLRRSGSFG) has biased composition (low complexity). A phosphoserine mark is found at S581, S582, S589, S608, S610, and S615. A compositionally biased stretch (low complexity) spans 601 to 622 (LSDSRTLSSSSMDLSRRSSLVG).

It belongs to the kinesin light chain family. Oligomeric complex composed of two heavy chains and two light chains. Interacts (via TPR repeats) with PLEKHM2.

It localises to the cytoplasm. The protein localises to the cytoskeleton. The protein resides in the lysosome membrane. Its function is as follows. Kinesin is a microtubule-associated force-producing protein that plays a role in organelle transport. The light chain functions in coupling of cargo to the heavy chain or in the modulation of its ATPase activity. Through binding with PLEKHM2 and ARL8B, recruits kinesin-1 to lysosomes and hence direct lysosomes movement toward microtubule plus ends. This is Kinesin light chain 2 from Homo sapiens (Human).